The primary structure comprises 318 residues: Ribose-phosphate pyrophosphokinase 2 (318 aa).

Mg(2+)-binding residues include Asp132, His134, His143, and Asp147.

Belongs to the ribose-phosphate pyrophosphokinase family.

The protein localises to the cytoplasm. It catalyses the reaction D-ribose 5-phosphate + ATP = 5-phospho-alpha-D-ribose 1-diphosphate + AMP + H(+). It functions in the pathway metabolic intermediate biosynthesis; 5-phospho-alpha-D-ribose 1-diphosphate biosynthesis; 5-phospho-alpha-D-ribose 1-diphosphate from D-ribose 5-phosphate (route I): step 1/1. 5-phosphoribose 1-diphosphate synthase involved in nucleotide, histidine, and tryptophan biosynthesis. Active in heteromultimeric complexes with other 5-phosphoribose 1-diphosphate synthases (PRS2, PRS3, PRS4 and PRS5). This is Ribose-phosphate pyrophosphokinase 2 (PRS2) from Saccharomyces cerevisiae (strain ATCC 204508 / S288c) (Baker's yeast).